The sequence spans 457 residues: NAC domain-containing protein 69 (457 aa).

The 150-residue stretch at 4 to 153 (DLVGYRFYPT…NYVICQVMYK (150 aa)) folds into the NAC domain. A DNA-binding region spans residues 107–159 (IGIKKTLVYYEGRVPKGVWTPWVMHEYHITCLPQDQRNYVICQVMYKGEDGDV). 2 disordered regions span residues 158 to 180 (DVPS…SNTV) and 302 to 332 (DSNS…SNRQ). Residues 162–180 (GGNNSSEPSQSLVSDSNTV) show a composition bias toward polar residues. A compositionally biased stretch (low complexity) spans 302–311 (DSNSDAESIS). Residues 312–332 (ATSYQGTSSPGDDSVGSSNRQ) are compositionally biased toward polar residues. Residues 421-441 (IYLMRMIIGFILLLALISNII) traverse the membrane as a helical segment.

Its subcellular location is the membrane. The protein resides in the nucleus. Functionally, transcription activator activated by proteolytic cleavage through regulated intramembrane proteolysis (RIP). Involved in salt stress response during seed germination and seedling growth. Binds the auxin-responsive IAA30 gene promoter and may serve as a molecular link that interconnects a developmental feedback loop of auxin signaling with a salt signal transduction pathway during seed germination. This is NAC domain-containing protein 69 (NAC69) from Arabidopsis thaliana (Mouse-ear cress).